The sequence spans 257 residues: Imidazole glycerol phosphate synthase subunit HisF (257 aa).

Residues D11 and D130 contribute to the active site.

It belongs to the HisA/HisF family. As to quaternary structure, heterodimer of HisH and HisF.

It localises to the cytoplasm. The enzyme catalyses 5-[(5-phospho-1-deoxy-D-ribulos-1-ylimino)methylamino]-1-(5-phospho-beta-D-ribosyl)imidazole-4-carboxamide + L-glutamine = D-erythro-1-(imidazol-4-yl)glycerol 3-phosphate + 5-amino-1-(5-phospho-beta-D-ribosyl)imidazole-4-carboxamide + L-glutamate + H(+). It participates in amino-acid biosynthesis; L-histidine biosynthesis; L-histidine from 5-phospho-alpha-D-ribose 1-diphosphate: step 5/9. Its function is as follows. IGPS catalyzes the conversion of PRFAR and glutamine to IGP, AICAR and glutamate. The HisF subunit catalyzes the cyclization activity that produces IGP and AICAR from PRFAR using the ammonia provided by the HisH subunit. The chain is Imidazole glycerol phosphate synthase subunit HisF from Aliivibrio fischeri (strain ATCC 700601 / ES114) (Vibrio fischeri).